Here is a 190-residue protein sequence, read N- to C-terminus: Elongation factor P-like protein (190 aa).

The protein belongs to the elongation factor P family.

This Yersinia enterocolitica serotype O:8 / biotype 1B (strain NCTC 13174 / 8081) protein is Elongation factor P-like protein.